The following is a 240-amino-acid chain: UDP-2,3-diacylglucosamine hydrolase (240 aa).

Asp8, His10, Asp41, Asn79, and His114 together coordinate Mn(2+). 79–80 (NR) serves as a coordination point for substrate. Substrate is bound by residues Asp122, Ser160, Asn164, Lys167, and His195. Positions 195 and 197 each coordinate Mn(2+).

The protein belongs to the LpxH family. The cofactor is Mn(2+).

The protein resides in the cell inner membrane. The catalysed reaction is UDP-2-N,3-O-bis[(3R)-3-hydroxytetradecanoyl]-alpha-D-glucosamine + H2O = 2-N,3-O-bis[(3R)-3-hydroxytetradecanoyl]-alpha-D-glucosaminyl 1-phosphate + UMP + 2 H(+). It participates in glycolipid biosynthesis; lipid IV(A) biosynthesis; lipid IV(A) from (3R)-3-hydroxytetradecanoyl-[acyl-carrier-protein] and UDP-N-acetyl-alpha-D-glucosamine: step 4/6. Its function is as follows. Hydrolyzes the pyrophosphate bond of UDP-2,3-diacylglucosamine to yield 2,3-diacylglucosamine 1-phosphate (lipid X) and UMP by catalyzing the attack of water at the alpha-P atom. Involved in the biosynthesis of lipid A, a phosphorylated glycolipid that anchors the lipopolysaccharide to the outer membrane of the cell. The protein is UDP-2,3-diacylglucosamine hydrolase of Pectobacterium carotovorum subsp. carotovorum (strain PC1).